A 677-amino-acid chain; its full sequence is Probable potassium transport system protein Kup (677 aa).

12 helical membrane passes run 13–33 (GALI…LYTM), 54–74 (VSLV…IIAL), 98–118 (WLLL…TLTP), 137–157 (FIFP…LLIV), 171–191 (IFGP…LVNI), 217–237 (TGIF…ALYS), 249–269 (VSWI…GAWI), 296–316 (IFGV…LISG), 345–365 (MYIG…VWAF), 374–394 (AYGL…YQFI), 402–422 (ILAF…LIAS), and 429–449 (GGYA…IWFY).

It belongs to the HAK/KUP transporter (TC 2.A.72) family.

It localises to the cell membrane. It carries out the reaction K(+)(in) + H(+)(in) = K(+)(out) + H(+)(out). In terms of biological role, transport of potassium into the cell. Likely operates as a K(+):H(+) symporter. In Leuconostoc mesenteroides subsp. mesenteroides (strain ATCC 8293 / DSM 20343 / BCRC 11652 / CCM 1803 / JCM 6124 / NCDO 523 / NBRC 100496 / NCIMB 8023 / NCTC 12954 / NRRL B-1118 / 37Y), this protein is Probable potassium transport system protein Kup.